Here is a 109-residue protein sequence, read N- to C-terminus: C-X-C motif chemokine 13 (109 aa).

The first 21 residues, Met-1–Gly-21, serve as a signal peptide directing secretion. 2 disulfide bridges follow: Cys-32–Cys-59 and Cys-34–Cys-75.

It belongs to the intercrine alpha (chemokine CxC) family. As to expression, found in spleen (B-cell-rich zone or follicles), Peyer patches (strongest within germinal centers and extending to the mantle zone) and lymph nodes (in reticular pattern in follicles).

Its subcellular location is the secreted. Strongly chemotactic for B-lymphocytes, weakly for spleen monocytes and macrophages but no chemotactic activity for granulocytes. Binds to BLR1/CXCR5. May play a role in directing the migration of B-lymphocytes to follicles in secondary lymphoid organs. This is C-X-C motif chemokine 13 (Cxcl13) from Mus musculus (Mouse).